A 377-amino-acid polypeptide reads, in one-letter code: 23S rRNA (uracil(747)-C(5))-methyltransferase RlmC (377 aa).

The [4Fe-4S] cluster site is built by cysteine 3, cysteine 11, cysteine 14, and cysteine 87. Residues glutamine 212, phenylalanine 241, glutamate 262, and asparagine 307 each coordinate S-adenosyl-L-methionine. Cysteine 334 acts as the Nucleophile in catalysis.

It belongs to the class I-like SAM-binding methyltransferase superfamily. RNA M5U methyltransferase family. RlmC subfamily.

The catalysed reaction is uridine(747) in 23S rRNA + S-adenosyl-L-methionine = 5-methyluridine(747) in 23S rRNA + S-adenosyl-L-homocysteine + H(+). In terms of biological role, catalyzes the formation of 5-methyl-uridine at position 747 (m5U747) in 23S rRNA. This chain is 23S rRNA (uracil(747)-C(5))-methyltransferase RlmC, found in Photorhabdus laumondii subsp. laumondii (strain DSM 15139 / CIP 105565 / TT01) (Photorhabdus luminescens subsp. laumondii).